An 839-amino-acid chain; its full sequence is Putative AC9 transposase (839 aa).

Over residues 32–43 the composition is skewed to polar residues; it reads SSSNANGTATDP. The disordered stretch occupies residues 32-85; sequence SSSNANGTATDPSQDDMAIVHEPQPQPQPQPEPQPQPQPEPEEEAPQKRAKKCT. Pro residues predominate over residues 55 to 70; it reads QPQPQPQPEPQPQPQP.

The polypeptide is Putative AC9 transposase (Zea mays (Maize)).